Reading from the N-terminus, the 270-residue chain is 4-hydroxy-tetrahydrodipicolinate reductase (270 aa).

Residues 9–14 (GAGGRM) and Glu35 each bind NAD(+). Residue Arg36 participates in NADP(+) binding. Residues 99–101 (GTT) and 123–126 (ASNF) each bind NAD(+). The Proton donor/acceptor role is filled by His156. His157 contributes to the (S)-2,3,4,5-tetrahydrodipicolinate binding site. The active-site Proton donor is the Lys160. 166 to 167 (GT) is a (S)-2,3,4,5-tetrahydrodipicolinate binding site.

Belongs to the DapB family.

It localises to the cytoplasm. The catalysed reaction is (S)-2,3,4,5-tetrahydrodipicolinate + NAD(+) + H2O = (2S,4S)-4-hydroxy-2,3,4,5-tetrahydrodipicolinate + NADH + H(+). It catalyses the reaction (S)-2,3,4,5-tetrahydrodipicolinate + NADP(+) + H2O = (2S,4S)-4-hydroxy-2,3,4,5-tetrahydrodipicolinate + NADPH + H(+). It functions in the pathway amino-acid biosynthesis; L-lysine biosynthesis via DAP pathway; (S)-tetrahydrodipicolinate from L-aspartate: step 4/4. Functionally, catalyzes the conversion of 4-hydroxy-tetrahydrodipicolinate (HTPA) to tetrahydrodipicolinate. This chain is 4-hydroxy-tetrahydrodipicolinate reductase, found in Haemophilus influenzae (strain ATCC 51907 / DSM 11121 / KW20 / Rd).